Reading from the N-terminus, the 202-residue chain is Large ribosomal subunit protein bL25 (202 aa).

The interval 1–21 (MSKESYELKAEARERVGKGSS) is disordered.

Belongs to the bacterial ribosomal protein bL25 family. CTC subfamily. Part of the 50S ribosomal subunit; part of the 5S rRNA/L5/L18/L25 subcomplex. Contacts the 5S rRNA. Binds to the 5S rRNA independently of L5 and L18.

Its function is as follows. This is one of the proteins that binds to the 5S RNA in the ribosome where it forms part of the central protuberance. In Agrobacterium fabrum (strain C58 / ATCC 33970) (Agrobacterium tumefaciens (strain C58)), this protein is Large ribosomal subunit protein bL25.